The chain runs to 567 residues: Potassium-transporting ATPase potassium-binding subunit (567 aa).

The next 12 helical transmembrane spans lie at 3–23, 64–84, 136–156, 179–199, 220–240, 254–274, 285–305, 330–350, 374–394, 420–440, 488–508, and 527–547; these read MIGWLQIILFCVIIVALTKPL, LTYTVAMLLFHVGGFLVIYGV, GLTHQNFLSAATGIALAMALI, LYVLLPICVVYTLFLVWQGIP, VGPVASQVAIKMLGTNGGGFF, LSNFVQMLSIFALGAALTNVF, WAILAVMGVLFVAGVAVTYWA, FGLVASSLFAVITTAASCGAV, IIVGGVGAGLYGMLLFVVLAI, AMLAILVLPLMYLGWTAVGVV, LASAMFVGRFFMIVPAMAIAG, and GGLFVGLVVGVILIIGGLTFF.

It belongs to the KdpA family. As to quaternary structure, the system is composed of three essential subunits: KdpA, KdpB and KdpC.

It localises to the cell inner membrane. Its function is as follows. Part of the high-affinity ATP-driven potassium transport (or Kdp) system, which catalyzes the hydrolysis of ATP coupled with the electrogenic transport of potassium into the cytoplasm. This subunit binds the periplasmic potassium ions and delivers the ions to the membrane domain of KdpB through an intramembrane tunnel. The protein is Potassium-transporting ATPase potassium-binding subunit of Bradyrhizobium diazoefficiens (strain JCM 10833 / BCRC 13528 / IAM 13628 / NBRC 14792 / USDA 110).